Reading from the N-terminus, the 165-residue chain is Transcription antitermination protein NusB (165 aa).

The protein belongs to the NusB family.

Its function is as follows. Involved in transcription antitermination. Required for transcription of ribosomal RNA (rRNA) genes. Binds specifically to the boxA antiterminator sequence of the ribosomal RNA (rrn) operons. The sequence is that of Transcription antitermination protein NusB from Nitratidesulfovibrio vulgaris (strain DSM 19637 / Miyazaki F) (Desulfovibrio vulgaris).